A 290-amino-acid polypeptide reads, in one-letter code: Acetyl-coenzyme A carboxylase carboxyl transferase subunit beta (290 aa).

A CoA carboxyltransferase N-terminal domain is found at 27-290 (LWVKCPSCEA…LQRQPADALA (264 aa)). The Zn(2+) site is built by Cys-31, Cys-34, Cys-50, and Cys-53. The C4-type zinc-finger motif lies at 31–53 (CPSCEAVLYRNDVDANLHVCPKC).

It belongs to the AccD/PCCB family. As to quaternary structure, acetyl-CoA carboxylase is a heterohexamer composed of biotin carboxyl carrier protein (AccB), biotin carboxylase (AccC) and two subunits each of ACCase subunit alpha (AccA) and ACCase subunit beta (AccD). It depends on Zn(2+) as a cofactor.

The protein localises to the cytoplasm. It catalyses the reaction N(6)-carboxybiotinyl-L-lysyl-[protein] + acetyl-CoA = N(6)-biotinyl-L-lysyl-[protein] + malonyl-CoA. Its pathway is lipid metabolism; malonyl-CoA biosynthesis; malonyl-CoA from acetyl-CoA: step 1/1. Its function is as follows. Component of the acetyl coenzyme A carboxylase (ACC) complex. Biotin carboxylase (BC) catalyzes the carboxylation of biotin on its carrier protein (BCCP) and then the CO(2) group is transferred by the transcarboxylase to acetyl-CoA to form malonyl-CoA. The sequence is that of Acetyl-coenzyme A carboxylase carboxyl transferase subunit beta from Burkholderia cenocepacia (strain ATCC BAA-245 / DSM 16553 / LMG 16656 / NCTC 13227 / J2315 / CF5610) (Burkholderia cepacia (strain J2315)).